The following is a 674-amino-acid chain: YAP1-binding protein 1 (674 aa).

Belongs to the YBP1 family. Interacts with YAP1. Forms a peroxide stress induced complex with YAP1 in the cytoplasm. Systematic proteome-wide 2-hybrid interaction studies suggest that YAP1, HYR1/GPX3, and YBP1 all interact with the nuclear pore complex subunit NUP116, which is involved in nucleocytoplasmic transport.

Its subcellular location is the cytoplasm. In terms of biological role, involved in oxidative stress response and redox homeostasis. Required for hydrogen peroxide-induced oxidation and nuclear localization (activation) of YAP1. Functions probably in concert with HYP1/GPX3, the actual YAP1 modifying enzyme. YBP1 is not required for HYP1/GPX3-independent, diamide-induced oxidation of YAP1. This Saccharomyces cerevisiae (strain ATCC 204508 / S288c) (Baker's yeast) protein is YAP1-binding protein 1.